The following is a 94-amino-acid chain: Integration host factor subunit beta (94 aa).

The protein belongs to the bacterial histone-like protein family. In terms of assembly, heterodimer of an alpha and a beta chain.

In terms of biological role, this protein is one of the two subunits of integration host factor, a specific DNA-binding protein that functions in genetic recombination as well as in transcriptional and translational control. In Vibrio campbellii (strain ATCC BAA-1116), this protein is Integration host factor subunit beta.